The chain runs to 154 residues: Heat shock protein beta-3 (154 aa).

A disordered region spans residues 48-71 (ARGAGTPQALAEDSASTEKPPGEG). Residues 57–154 (LAEDSASTEK…VEVKDSLGTK (98 aa)) enclose the sHSP domain.

It belongs to the small heat shock protein (HSP20) family.

It is found in the cytoplasm. The protein resides in the nucleus. Inhibitor of actin polymerization. The sequence is that of Heat shock protein beta-3 (Hspb3) from Mus musculus (Mouse).